The following is a 203-amino-acid chain: uncharacterized protein (203 aa).

This is an uncharacterized protein from Archaeoglobus fulgidus (strain ATCC 49558 / DSM 4304 / JCM 9628 / NBRC 100126 / VC-16).